The sequence spans 346 residues: N-acetyl-gamma-glutamyl-phosphate reductase (346 aa).

The active site involves C154.

It belongs to the NAGSA dehydrogenase family. Type 1 subfamily.

The protein resides in the cytoplasm. It carries out the reaction N-acetyl-L-glutamate 5-semialdehyde + phosphate + NADP(+) = N-acetyl-L-glutamyl 5-phosphate + NADPH + H(+). It functions in the pathway amino-acid biosynthesis; L-arginine biosynthesis; N(2)-acetyl-L-ornithine from L-glutamate: step 3/4. Functionally, catalyzes the NADPH-dependent reduction of N-acetyl-5-glutamyl phosphate to yield N-acetyl-L-glutamate 5-semialdehyde. The chain is N-acetyl-gamma-glutamyl-phosphate reductase from Rhodopirellula baltica (strain DSM 10527 / NCIMB 13988 / SH1).